The following is a 556-amino-acid chain: Zinc finger protein GLI1 (556 aa).

Disordered regions lie at residues 57–83 (TEHP…KKRA), 133–178 (SLGY…TPAR), and 200–222 (KYPE…QDPL). Low complexity predominate over residues 135–148 (GYQNPPGQQKGQGQ). 5 C2H2-type zinc fingers span residues 247–272 (TNCY…NNEH), 280–307 (FVCH…MRRH), 313–337 (HKCT…LRSH), 343–368 (YVCE…NRTH), and 374–399 (YICK…KTVH). The interaction with DNA stretch occupies residues 295 to 303 (KAQYMLVVH). 2 interaction with DNA regions span residues 357–362 (ASDRAK) and 387–393 (DPSSLRK). The disordered stretch occupies residues 387–492 (DPSSLRKHVK…VEMTGNTGGS (106 aa)). The segment covering 454-472 (SKPQPSPGGQSSCSSDRSP) has biased composition (low complexity).

Belongs to the GLI C2H2-type zinc-finger protein family.

The protein resides in the cytoplasm. It localises to the nucleus. In terms of biological role, acts as a transcriptional activator. Binds to the DNA consensus sequence 5'-GACCACCCA-3'. May regulate the transcription of specific genes during normal development. May play a role in craniofacial development and digital development, as well as development of the central nervous system and gastrointestinal tract. Mediates SHH signaling. Plays a role in cell proliferation and differentiation via its role in SHH signaling. This is Zinc finger protein GLI1 (GLI1) from Gallus gallus (Chicken).